The chain runs to 1132 residues: Ubiquitin carboxyl-terminal hydrolase 43 (1132 aa).

Residues 1–103 (MDPGVGNALG…GARPPGAQGL (103 aa)) are disordered. Positions 17 to 28 (RPRRRRSLRRLL) are enriched in basic residues. Composition is skewed to low complexity over residues 29–44 (NRFL…SGDS) and 63–78 (FACA…GSPG). The USP domain occupies 101 to 710 (QGLKNHGNTC…GAYILFYQKR (610 aa)). C110 serves as the catalytic Nucleophile. Catalysis depends on H668, which acts as the Proton acceptor. R746 carries the post-translational modification Asymmetric dimethylarginine. Disordered stretches follow at residues 839-891 (RRRP…TGVP), 935-1008 (TVMP…RGQG), 1024-1044 (RTVR…SDRL), and 1057-1106 (RESP…GEQI). The segment covering 941–950 (GDEKPARPEG) has biased composition (basic and acidic residues). The segment covering 958-967 (GSSQVGSQSS) has biased composition (low complexity). Position 970 is a phosphoserine (S970). The span at 994 to 1006 (AAMEERAPDKDRG) shows a compositional bias: basic and acidic residues.

The protein belongs to the peptidase C19 family.

The enzyme catalyses Thiol-dependent hydrolysis of ester, thioester, amide, peptide and isopeptide bonds formed by the C-terminal Gly of ubiquitin (a 76-residue protein attached to proteins as an intracellular targeting signal).. In terms of biological role, may recognize and hydrolyze the peptide bond at the C-terminal Gly of ubiquitin. Involved in the processing of poly-ubiquitin precursors as well as that of ubiquitinated proteins. In Mus musculus (Mouse), this protein is Ubiquitin carboxyl-terminal hydrolase 43 (Usp43).